The primary structure comprises 270 residues: Bark lectin (270 aa).

The signal sequence occupies residues 1-15; that stretch reads ISITFFLLLLNKVNS. 3 N-linked (GlcNAc...) asparagine glycosylation sites follow: asparagine 60, asparagine 76, and asparagine 127. The Mn(2+) site is built by glutamate 141 and aspartate 143. 4 residues coordinate Ca(2+): aspartate 143, histidine 145, asparagine 147, and aspartate 150. Positions 150 and 155 each coordinate Mn(2+). N-linked (GlcNAc...) asparagine glycosylation occurs at asparagine 201.

The protein belongs to the leguminous lectin family.

Functionally, galNAc-specific lectin. The sequence is that of Bark lectin from Styphnolobium japonicum (Japanese pagoda tree).